The following is a 471-amino-acid chain: A-type ATP synthase subunit B (471 aa).

The protein belongs to the ATPase alpha/beta chains family. As to quaternary structure, has multiple subunits with at least A(3), B(3), C, D, E, F, H, I and proteolipid K(x).

It is found in the cell membrane. Its function is as follows. Component of the A-type ATP synthase that produces ATP from ADP in the presence of a proton gradient across the membrane. The B chain is a regulatory subunit. This is A-type ATP synthase subunit B from Natronomonas pharaonis (strain ATCC 35678 / DSM 2160 / CIP 103997 / JCM 8858 / NBRC 14720 / NCIMB 2260 / Gabara) (Halobacterium pharaonis).